The chain runs to 374 residues: UDP-N-acetylglucosamine--N-acetylmuramyl-(pentapeptide) pyrophosphoryl-undecaprenol N-acetylglucosamine transferase (374 aa).

UDP-N-acetyl-alpha-D-glucosamine-binding positions include T14–G16, N125, R168, S196, and Q297.

The protein belongs to the glycosyltransferase 28 family. MurG subfamily.

The protein resides in the cell inner membrane. It catalyses the reaction di-trans,octa-cis-undecaprenyl diphospho-N-acetyl-alpha-D-muramoyl-L-alanyl-D-glutamyl-meso-2,6-diaminopimeloyl-D-alanyl-D-alanine + UDP-N-acetyl-alpha-D-glucosamine = di-trans,octa-cis-undecaprenyl diphospho-[N-acetyl-alpha-D-glucosaminyl-(1-&gt;4)]-N-acetyl-alpha-D-muramoyl-L-alanyl-D-glutamyl-meso-2,6-diaminopimeloyl-D-alanyl-D-alanine + UDP + H(+). The protein operates within cell wall biogenesis; peptidoglycan biosynthesis. Cell wall formation. Catalyzes the transfer of a GlcNAc subunit on undecaprenyl-pyrophosphoryl-MurNAc-pentapeptide (lipid intermediate I) to form undecaprenyl-pyrophosphoryl-MurNAc-(pentapeptide)GlcNAc (lipid intermediate II). This chain is UDP-N-acetylglucosamine--N-acetylmuramyl-(pentapeptide) pyrophosphoryl-undecaprenol N-acetylglucosamine transferase, found in Rhodopseudomonas palustris (strain BisA53).